We begin with the raw amino-acid sequence, 207 residues long: MTKLSKRQQQILEFIKQEVKTKGYPPSVREIGEAVGLASSSTVHGHLARLESKGYIRRDPTKPRAIEILDSDLTKEREKEEVISVPMIGKVTAGQPITAVENIEDYFPLPKRLAAGEKQLFMLEVMGDSMIEAGILDGDYVIVRQQSSANNGDIVVAMTEENEATVKRFFKEKDHIRLQPENVHLEPIIVRDCTILGKVIGVYRLIN.

The segment at residues 28 to 48 is a DNA-binding region (H-T-H motif); sequence VREIGEAVGLASSSTVHGHLA. Catalysis depends on for autocatalytic cleavage activity residues Ser129 and Lys167.

This sequence belongs to the peptidase S24 family. In terms of assembly, homodimer.

It catalyses the reaction Hydrolysis of Ala-|-Gly bond in repressor LexA.. Represses a number of genes involved in the response to DNA damage (SOS response), including recA and lexA. In the presence of single-stranded DNA, RecA interacts with LexA causing an autocatalytic cleavage which disrupts the DNA-binding part of LexA, leading to derepression of the SOS regulon and eventually DNA repair. This is LexA repressor from Geobacillus thermodenitrificans (strain NG80-2).